Reading from the N-terminus, the 269-residue chain is Capsid assembly scaffolding protein (269 aa).

Belongs to the T4likevirus capsid assembly scaffolding protein family.

It is found in the virion. Scaffolding protein involved in the icosahedric procapsid assembly. Coassembles with the capsid proteins to form the procapsid, in which the scaffolding protein is found within the external shell of icosahedrally arranged capsid protein subunits. In a subsequent step the scaffolding protein molecules are cleaved by the viral protease and released, except for the internal peptide VII. In terms of biological role, cleavage product of Gp22 that is incorporated into the mature phage head. The protein is Capsid assembly scaffolding protein (22) of Escherichia phage AR1 (Bacteriophage AR1).